An 847-amino-acid polypeptide reads, in one-letter code: Follistatin-related protein 5 (847 aa).

Positions 1-20 (MFKCWSVVLVLGFIFLESEG) are cleaved as a signal peptide. The Kazal-like domain occupies 83–135 (GQAECACMDLCKRHYKPVCGSDGEFYENHCEVHRAACLKKQKITIVHNEDCFF). Disulfide bonds link Cys-89-Cys-119, Cys-93-Cys-112, and Cys-101-Cys-133. EF-hand domains lie at 175–210 (RKKL…EELG) and 211–246 (KDLF…QVIQ). Residues Asp-188, Asp-190, Asn-192, Glu-199, Asp-226, Asn-228, Asp-230, His-232, and Glu-237 each coordinate Ca(2+). Ig-like domains follow at residues 250-337 (PEDQ…IFQV) and 341-426 (PVIR…EDIS). Intrachain disulfides connect Cys-270–Cys-321 and Cys-362–Cys-413. N-linked (GlcNAc...) asparagine glycans are attached at residues Asn-318 and Asn-394.

It localises to the secreted. This Homo sapiens (Human) protein is Follistatin-related protein 5 (FSTL5).